A 217-amino-acid chain; its full sequence is Casparian strip membrane protein 6 (217 aa).

The Cytoplasmic segment spans residues 1–57 (MEEAKHIEAVEAKQIEAEEAQRIKAGEAKQIEAGETSRSSRKVITFEPKLVINKGIS). Residues 58-78 (VLGFVLRLFAVFGTIGSALAM) form a helical membrane-spanning segment. Over 79-103 (GTTHESVVSLSQLVLLKVKYSDLPT) the chain is Extracellular. Residues 104-124 (LMFFVVANAIAGGYLVLSLPV) form a helical membrane-spanning segment. Over 125 to 138 (SIFHIFSTKAKTSR) the chain is Cytoplasmic. A helical membrane pass occupies residues 139 to 159 (IILLVIDTVMLALVSSGASAA). At 160 to 191 (TATVYLAHEGNTTANWPPICQQFDGFCERISG) the chain is on the extracellular side. An N-linked (GlcNAc...) asparagine glycan is attached at Asn-170. A helical membrane pass occupies residues 192–212 (SLIGSFCAVILLMLIVINSAI). The Cytoplasmic segment spans residues 213-217 (SLSRH).

This sequence belongs to the Casparian strip membrane proteins (CASP) family. Homodimer and heterodimers.

The protein localises to the cell membrane. Regulates membrane-cell wall junctions and localized cell wall deposition. Required for establishment of the Casparian strip membrane domain (CSD) and the subsequent formation of Casparian strips, a cell wall modification of the root endodermis that determines an apoplastic barrier between the intraorganismal apoplasm and the extraorganismal apoplasm and prevents lateral diffusion. This Arabidopsis lyrata subsp. lyrata (Lyre-leaved rock-cress) protein is Casparian strip membrane protein 6.